The following is a 604-amino-acid chain: Cytosolic Fe-S cluster assembly factor nar1 (604 aa).

Residues C20, C62, C65, C68, C215, and C270 each contribute to the [4Fe-4S] cluster site. Residues 434-461 (LPGAKPAVRPAAGRRQPMSRNAVSTGSS) are disordered. Residues 451 to 461 (MSRNAVSTGSS) are compositionally biased toward polar residues. 2 residues coordinate [4Fe-4S] cluster: C473 and C477.

This sequence belongs to the NARF family.

Component of the cytosolic Fe/S protein assembly machinery. Required for maturation of extramitochondrial Fe/S proteins. May play a role in the transfer of pre-assembled Fe/S clusters to target apoproteins. This chain is Cytosolic Fe-S cluster assembly factor nar1 (nar1), found in Penicillium rubens (strain ATCC 28089 / DSM 1075 / NRRL 1951 / Wisconsin 54-1255) (Penicillium chrysogenum).